We begin with the raw amino-acid sequence, 490 residues long: Cytochrome P450 2C29 (490 aa).

An N-terminal signal peptide occupies residues 1 to 25; that stretch reads MDLVVFLALTLSCLILLSLWRQSSG. N6-acetyllysine occurs at positions 249, 252, and 375. Cys-435 contacts heme.

Belongs to the cytochrome P450 family. Heme is required as a cofactor. Expressed in liver as well as in extrahepatic tissues including brain, kidney, lung, heart, and intestine.

It localises to the endoplasmic reticulum membrane. It is found in the microsome membrane. The enzyme catalyses an organic molecule + reduced [NADPH--hemoprotein reductase] + O2 = an alcohol + oxidized [NADPH--hemoprotein reductase] + H2O + H(+). It catalyses the reaction (5Z,8Z,11Z,14Z)-eicosatetraenoate + reduced [NADPH--hemoprotein reductase] + O2 = 14,15-epoxy-(5Z,8Z,11Z)-eicosatrienoate + oxidized [NADPH--hemoprotein reductase] + H2O + H(+). It participates in lipid metabolism; arachidonate metabolism. A cytochrome P450 monooxygenase that selectively catalyzes the epoxidation of 14,15 double bond of (5Z,8Z,11Z,14Z)-eicosatetraenoic acid (arachidonate) forming 14,15-epoxyeicosatrienoic acid (14,15-EET) regioisomer. Mechanistically, uses molecular oxygen inserting one oxygen atom into a substrate, and reducing the second into a water molecule, with two electrons provided by NADPH via cytochrome P450 reductase (CPR; NADPH--hemoprotein reductase). This is Cytochrome P450 2C29 from Mus musculus (Mouse).